A 418-amino-acid chain; its full sequence is Endoglucanase EG-II (418 aa).

An N-terminal signal peptide occupies residues 1-21 (MNKSVAPLLLAASILYGGAAA). Gln22 bears the Pyrrolidone carboxylic acid mark. The CBM1 domain occupies 22–57 (QQTVWGQCGGIGWSGPTNCAPGSACSTLNPYYAQCI). A linker region spans residues 58–91 (PGATTITTSTRPPSGPTTTTRATSTSSSTPPTSS). The disordered stretch occupies residues 63–91 (ITTSTRPPSGPTTTTRATSTSSSTPPTSS). Residues 92 to 418 (GVRFAGVNIA…SLVSSCLARK (327 aa)) are catalytic. An intrachain disulfide couples Cys107 to Cys113. N-linked (GlcNAc) asparagine glycosylation is present at Asn124. Cys183 and Cys190 are joined by a disulfide. Glu239 functions as the Proton donor/acceptor in the catalytic mechanism. 2 disulfide bridges follow: Cys323–Cys359 and Cys364–Cys414. The active-site Nucleophile is the Glu350.

It belongs to the glycosyl hydrolase 5 (cellulase A) family.

It localises to the secreted. It carries out the reaction Endohydrolysis of (1-&gt;4)-beta-D-glucosidic linkages in cellulose, lichenin and cereal beta-D-glucans.. In terms of biological role, endoglucanase (EG) that cleaves the internal beta-1,4-glucosidic bonds in cellulose. The degradation of cellulose involves an interplay between different cellulolytic enzymes. Hydrolysis starts with EGs, which cut internal glycosidic linkages to reduce the polymerization degree of the substrate and creates new chain ends for exocellobiohydrolases (CBHs). The CBH release the disaccharide cellobiose from the non-reducing end of the cellulose polymer chain. Finally, beta-1,4-glucosidases hydrolyze the cellobiose and other short cello-oligosaccharides into glucose units. This chain is Endoglucanase EG-II (egl2), found in Hypocrea jecorina (strain ATCC 56765 / BCRC 32924 / NRRL 11460 / Rut C-30) (Trichoderma reesei).